The sequence spans 911 residues: ATP-dependent DNA helicase Q-like 5 (911 aa).

A disordered region spans residues methionine 1–leucine 84. The span at serine 20 to arginine 48 shows a compositional bias: low complexity. Residues proline 54 to proline 79 are compositionally biased toward pro residues. A Helicase ATP-binding domain is found at isoleucine 278 to asparagine 448. Leucine 291–serine 298 lines the ATP pocket. The DEAH box motif lies at aspartate 390–histidine 393. The Helicase C-terminal domain maps to arginine 470–glutamate 628.

Belongs to the helicase family. RecQ subfamily. As to expression, mostly expressed in roots, seedlings, shoots, shoot apical mersitem, flowers, and siliques.

It localises to the nucleus. The enzyme catalyses Couples ATP hydrolysis with the unwinding of duplex DNA by translocating in the 3'-5' direction.. It catalyses the reaction ATP + H2O = ADP + phosphate + H(+). Its function is as follows. 3'-5' DNA helicase that may play a role in the repair of DNA. This is ATP-dependent DNA helicase Q-like 5 (RECQL5) from Arabidopsis thaliana (Mouse-ear cress).